The following is a 348-amino-acid chain: MTAPSQVLKIRRPDDWHVHLRDGDMLKTVVPYTSEIYGRAIVMPNLASPITTVDAAIAYRQRILNAVPAGHDFTPLMTCYLTDSLDADELERGFHEGVFTAAKLYPANATTNSSHGVTSVDAIMPVLERMEKLGMPLLVHGEVTHADVDIFDREARFIDTVMEPLRQRLTTLKVVFEHITTKDAAQYVRDGNDYLAATITPQHLMFNRNDMLVGGIRPHLYCLPILKRNIHQQALRELVASGFTRAFLGTDSAPHSRHRKETSCGCAGCFNAPSALGSYAAVFEEMNALAHFEAFCSLNGPQFYGLPVNAGWVELVRDEQQIPGNIALADDSLVPFLAGETIRWSVKK.

Residues H17 and H19 each contribute to the Zn(2+) site. Residues 19–21 (HLR) and N45 contribute to the substrate site. Residues K103, H140, and H178 each contribute to the Zn(2+) site. Residue K103 is modified to N6-carboxylysine. Residue H140 coordinates substrate. L223 contributes to the substrate binding site. A Zn(2+)-binding site is contributed by D251. Residue D251 is part of the active site. Positions 255 and 267 each coordinate substrate.

Belongs to the metallo-dependent hydrolases superfamily. DHOase family. Class II DHOase subfamily. In terms of assembly, homodimer. Zn(2+) serves as cofactor.

It catalyses the reaction (S)-dihydroorotate + H2O = N-carbamoyl-L-aspartate + H(+). The protein operates within pyrimidine metabolism; UMP biosynthesis via de novo pathway; (S)-dihydroorotate from bicarbonate: step 3/3. Functionally, catalyzes the reversible cyclization of carbamoyl aspartate to dihydroorotate. The chain is Dihydroorotase from Salmonella heidelberg (strain SL476).